The sequence spans 427 residues: Glutamate-1-semialdehyde 2,1-aminomutase (427 aa).

Lysine 267 carries the N6-(pyridoxal phosphate)lysine modification.

The protein belongs to the class-III pyridoxal-phosphate-dependent aminotransferase family. HemL subfamily. Homodimer. Pyridoxal 5'-phosphate serves as cofactor.

It localises to the cytoplasm. The enzyme catalyses (S)-4-amino-5-oxopentanoate = 5-aminolevulinate. It participates in porphyrin-containing compound metabolism; protoporphyrin-IX biosynthesis; 5-aminolevulinate from L-glutamyl-tRNA(Glu): step 2/2. This is Glutamate-1-semialdehyde 2,1-aminomutase from Citrifermentans bemidjiense (strain ATCC BAA-1014 / DSM 16622 / JCM 12645 / Bem) (Geobacter bemidjiensis).